The following is a 250-amino-acid chain: Neurotrophic factor BDNF precursor form (250 aa).

The signal sequence occupies residues 1–18; it reads MTILFLTMVISYFGCMKA. Positions 19 to 131 are excised as a propeptide; sequence APMKEANLRA…AANMSMRVRR (113 aa). 3 disulfides stabilise this stretch: cysteine 144/cysteine 211, cysteine 189/cysteine 240, and cysteine 199/cysteine 242.

The protein belongs to the NGF-beta family. Monomers and homodimers. Binds to NTRK2/TRKB. Can form heterodimers with other neurotrophin family members, such as NTF3 and NTF4 (in vitro), but the physiological relevance of this is not clear. BDNF precursor form: interacts with the heterodimer formed by NGFR and SORCS2. Mature BDNF has much lower affinity for the heterodimer formed by NGFR and SORCS2. N-glycosylated and glycosulfated, contrary to mature BDNF. In terms of processing, mature BDNF is produced by proteolytic removal of the propeptide, catalyzed by a FURIN family member. In addition, the precursor form is proteolytically cleaved within the propeptide, but this is not an obligatory intermediate for the production of mature BDNF. Can be converted into mature BDNF by plasmin (PLG).

The protein resides in the secreted. In terms of biological role, important signaling molecule that activates signaling cascades downstream of NTRK2. During development, promotes the survival and differentiation of selected neuronal populations of the peripheral and central nervous systems. Participates in axonal growth, pathfinding and in the modulation of dendritic growth and morphology. Major regulator of synaptic transmission and plasticity at adult synapses in many regions of the CNS. The versatility of BDNF is emphasized by its contribution to a range of adaptive neuronal responses including long-term potentiation (LTP), long-term depression (LTD), certain forms of short-term synaptic plasticity, as well as homeostatic regulation of intrinsic neuronal excitability. Important signaling molecule that activates signaling cascades downstream of NTRK2. Activates signaling cascades via the heterodimeric receptor formed by NGFR and SORCS2. Signaling via NGFR and SORCS2 plays a role in synaptic plasticity and long-term depression (LTD). Binding to NGFR and SORCS2 promotes neuronal apoptosis. Promotes neuronal growth cone collapse. This is Neurotrophic factor BDNF precursor form (BDNF) from Bos taurus (Bovine).